A 464-amino-acid polypeptide reads, in one-letter code: Argininosuccinate lyase (464 aa).

The protein belongs to the lyase 1 family. Argininosuccinate lyase subfamily.

Its subcellular location is the cytoplasm. The enzyme catalyses 2-(N(omega)-L-arginino)succinate = fumarate + L-arginine. It functions in the pathway amino-acid biosynthesis; L-arginine biosynthesis; L-arginine from L-ornithine and carbamoyl phosphate: step 3/3. This chain is Argininosuccinate lyase, found in Pseudomonas putida (strain W619).